Reading from the N-terminus, the 215-residue chain is MAPGMRVCLLLLIAFTLLGPQRAAAFPAMPLSSLFANAVLRAQHLHQLVADTYKEFERTYIPEAQRHSIQSTQTAFCFSETIPAPTGKDEAQQRSDVELLRFSLLLIQSWLSPVQFLSRVFTNSLVFGTSDRVYEKLRDLEEGIQALMQELEDGSSRGGLVLKTTYDKFDTNLRSDEALLKNYGLLSCFKKDLHKAETYLRVMECRRFVESSCAF.

The first 25 residues, 1–25 (MAPGMRVCLLLLIAFTLLGPQRAAA), serve as a signal peptide directing secretion. Residue His-44 participates in Zn(2+) binding. The residue at position 130 (Ser-130) is a Phosphoserine. Glu-197 contacts Zn(2+).

This sequence belongs to the somatotropin/prolactin family.

The protein resides in the secreted. Its function is as follows. Plays an important role in growth control. Its major role in stimulating body growth is to stimulate the liver and other tissues to secrete IGF1. It stimulates both the differentiation and proliferation of myoblasts. It also stimulates amino acid uptake and protein synthesis in muscle and other tissues. The protein is Somatotropin (GH1) of Monodelphis domestica (Gray short-tailed opossum).